A 323-amino-acid polypeptide reads, in one-letter code: tRNA U34 carboxymethyltransferase (323 aa).

Residues K91, W105, K110, G130, 181-182 (IE), M196, Y200, and R315 each bind carboxy-S-adenosyl-L-methionine.

This sequence belongs to the class I-like SAM-binding methyltransferase superfamily. CmoB family. In terms of assembly, homotetramer.

The catalysed reaction is carboxy-S-adenosyl-L-methionine + 5-hydroxyuridine(34) in tRNA = 5-carboxymethoxyuridine(34) in tRNA + S-adenosyl-L-homocysteine + H(+). In terms of biological role, catalyzes carboxymethyl transfer from carboxy-S-adenosyl-L-methionine (Cx-SAM) to 5-hydroxyuridine (ho5U) to form 5-carboxymethoxyuridine (cmo5U) at position 34 in tRNAs. This chain is tRNA U34 carboxymethyltransferase, found in Yersinia pseudotuberculosis serotype O:3 (strain YPIII).